Consider the following 272-residue polypeptide: Phosphonates import ATP-binding protein PhnC (272 aa).

The region spanning 2-246 (LELQRLTKTY…VLATIYGAED (245 aa)) is the ABC transporter domain. 35–42 (GPSGAGKS) contacts ATP. The disordered stretch occupies residues 248–272 (ASSGREPAPEREPEDTERHLAEVGR). Over residues 254-272 (PAPEREPEDTERHLAEVGR) the composition is skewed to basic and acidic residues.

Belongs to the ABC transporter superfamily. Phosphonates importer (TC 3.A.1.9.1) family. As to quaternary structure, the complex is composed of two ATP-binding proteins (PhnC), two transmembrane proteins (PhnE) and a solute-binding protein (PhnD).

The protein resides in the cell inner membrane. The catalysed reaction is phosphonate(out) + ATP + H2O = phosphonate(in) + ADP + phosphate + H(+). Functionally, part of the ABC transporter complex PhnCDE involved in phosphonates import. Responsible for energy coupling to the transport system. The chain is Phosphonates import ATP-binding protein PhnC from Chromohalobacter salexigens (strain ATCC BAA-138 / DSM 3043 / CIP 106854 / NCIMB 13768 / 1H11).